A 516-amino-acid chain; its full sequence is Na(+)/H(+) antiporter NhaB (516 aa).

12 helical membrane passes run 23–43, 61–80, 97–117, 120–140, 144–164, 202–222, 238–258, 303–323, 348–368, 391–411, 447–467, and 475–495; these read LALI…PFVA, CYPL…IGMT, LLLM…LFVF, LLLG…AAAF, FLDA…FYGI, LMMH…VGEP, FFLR…LTCL, ALIG…VGLI, TEAL…AVII, LFYL…VGTV, ATPN…APLI, and VWMA…CVEF.

Belongs to the NhaB Na(+)/H(+) (TC 2.A.34) antiporter family.

It is found in the cell inner membrane. The catalysed reaction is 2 Na(+)(in) + 3 H(+)(out) = 2 Na(+)(out) + 3 H(+)(in). Na(+)/H(+) antiporter that extrudes sodium in exchange for external protons. This Klebsiella pneumoniae subsp. pneumoniae (strain ATCC 700721 / MGH 78578) protein is Na(+)/H(+) antiporter NhaB.